Consider the following 370-residue polypeptide: Muconate cycloisomerase 1 (370 aa).

The active site involves K166. Positions 195, 221, and 246 each coordinate Mn(2+).

This sequence belongs to the mandelate racemase/muconate lactonizing enzyme family. Homooctamer. Mn(2+) serves as cofactor.

It carries out the reaction (S)-muconolactone = cis,cis-muconate + H(+). It functions in the pathway aromatic compound metabolism; beta-ketoadipate pathway; 5-oxo-4,5-dihydro-2-furylacetate from catechol: step 2/3. In terms of biological role, catalyzes a syn cycloisomerization. The protein is Muconate cycloisomerase 1 (catB) of Acinetobacter baylyi (strain ATCC 33305 / BD413 / ADP1).